A 688-amino-acid polypeptide reads, in one-letter code: Glycine--tRNA ligase beta subunit (688 aa).

This sequence belongs to the class-II aminoacyl-tRNA synthetase family. As to quaternary structure, tetramer of two alpha and two beta subunits.

It is found in the cytoplasm. It catalyses the reaction tRNA(Gly) + glycine + ATP = glycyl-tRNA(Gly) + AMP + diphosphate. In Shewanella sp. (strain MR-4), this protein is Glycine--tRNA ligase beta subunit.